Consider the following 59-residue polypeptide: UPF0391 membrane protein GbCGDNIH1_2123 (59 aa).

Helical transmembrane passes span 6-26 and 35-55; these read LALFFLVVSLIAGLFGFTGIS and ILFVIFLIVFVVLLVMALAAG.

The protein belongs to the UPF0391 family.

The protein localises to the cell membrane. The protein is UPF0391 membrane protein GbCGDNIH1_2123 of Granulibacter bethesdensis (strain ATCC BAA-1260 / CGDNIH1).